Consider the following 325-residue polypeptide: Quinone oxidoreductase (325 aa).

This sequence belongs to the zinc-containing alcohol dehydrogenase family. Quinone oxidoreductase subfamily.

The enzyme catalyses 2 a quinone + NADPH + H(+) = 2 a 1,4-benzosemiquinone + NADP(+). In Pseudomonas aeruginosa (strain ATCC 15692 / DSM 22644 / CIP 104116 / JCM 14847 / LMG 12228 / 1C / PRS 101 / PAO1), this protein is Quinone oxidoreductase (qor).